A 956-amino-acid polypeptide reads, in one-letter code: Golgin candidate 5 (956 aa).

2 disordered regions span residues 70-230 (MSFM…QHKI) and 278-298 (IFES…SSDE). 2 stretches are compositionally biased toward basic and acidic residues: residues 77–89 (SDEK…DSVR) and 118–129 (ANKETNVRREAD). Composition is skewed to polar residues over residues 160–177 (EYSL…SLQP) and 184–193 (TASQDSQPEQ). Basic and acidic residues predominate over residues 206–219 (SEAKEVTVENKDTV). Residues 333–765 (SDSADVILEL…LIQKDLEREK (433 aa)) adopt a coiled-coil conformation. Ser793 carries the phosphoserine modification. Positions 851–951 (SAYEATLRQK…EMYREQVNML (101 aa)) form a coiled coil.

As to quaternary structure, interacts with RABH1B and RABH1C, but not with RABD1 or RABD2A.

Its subcellular location is the golgi apparatus. The protein resides in the cytoplasm. Its function is as follows. Golgi matrix protein playing a role in tethering of vesicles to Golgi membranes and in maintaining the overall structure of the Golgi apparatus. The polypeptide is Golgin candidate 5 (GC5) (Arabidopsis thaliana (Mouse-ear cress)).